The following is a 407-amino-acid chain: Endo-1,4-beta-xylanase (407 aa).

The first 28 residues, 1 to 28, serve as a signal peptide directing secretion; the sequence is MRNVVRKPLTIGLALTLLLPMGMTATSA. Residues 42–406 enclose the GH10 domain; it reads ALNAPQLDQR…KPAYWAIIDH (365 aa). Residue E187 is the Proton donor of the active site. Catalysis depends on E293, which acts as the Nucleophile.

This sequence belongs to the glycosyl hydrolase 10 (cellulase F) family.

It is found in the secreted. It carries out the reaction Endohydrolysis of (1-&gt;4)-beta-D-xylosidic linkages in xylans.. The protein operates within glycan degradation; xylan degradation. The protein is Endo-1,4-beta-xylanase of Geobacillus stearothermophilus (Bacillus stearothermophilus).